The following is a 37-amino-acid chain: Glucagon-1 (37 aa).

It belongs to the glucagon family.

It localises to the secreted. In terms of biological role, glucagon plays a key role in glucose metabolism and homeostasis. Regulates blood glucose by increasing gluconeogenesis and decreasing glycolysis. This chain is Glucagon-1, found in Huso dauricus (Kaluga sturgeon).